The chain runs to 491 residues: Allene oxide synthase 3 (491 aa).

Positions 104, 135, and 139 each coordinate heme b. Positions 296 and 302 each coordinate (13S)-hydroperoxy-(9Z,11E)-octadecadienoate. A (13S)-hydroperoxy-(9Z,11E,15Z)-octadecatrienoate-binding site is contributed by N296. 2 residues coordinate heme b: K442 and C444.

It belongs to the cytochrome P450 family. Heme b is required as a cofactor. In terms of tissue distribution, expressed in roots. Not detected in aerial tissues, including cotyledons, leaves, stems and flower buds.

It catalyses the reaction (13S)-hydroperoxy-(9Z,11E,15Z)-octadecatrienoate = (9Z,13S,15Z)-12,13-epoxyoctadeca-9,11,15-trienoate + H2O. The enzyme catalyses (13S)-hydroperoxy-(9Z,11E)-octadecadienoate = (9Z,13S)-12,13-epoxyoctadeca-9,11-dienoate + H2O. It carries out the reaction (9Z,13S,15Z)-12,13-epoxyoctadeca-9,11,15-trienoate = (9S,13S,15Z)-12-oxophyto-10,15-dienoate. In terms of biological role, cytochrome P450 metabolizing both 13- and 9-hydroperoxides of linoleic and linolenic acids, but with a marked preference for 9-hydroperoxy fatty acids. Catalyzes not only the synthesis of allene oxide, but also its hydrolysis and cyclization. The first step is the synthesis of (12Z)-9,10-epoxyoctadeca-10,12-dienoic acid (9,10-EOD) and the final products are (9R)-alpha-ketol and the racemic cis-10-oxo-11-phytoenoic acid. The cyclase activity possesses regiospecificity and (9Z)-12,13-epoxyoctadeca-9,11-dienoic acid (12,13-EOD) is significantly less efficient as a substrate for cyclopentenone production than 9,10-EOD. Has no hydroperoxide lyase activity. May play a defensive role against soil-borne pests that affect roots or juvenile tissues as they emerge from the germinating seed. The protein is Allene oxide synthase 3 of Solanum lycopersicum (Tomato).